A 122-amino-acid polypeptide reads, in one-letter code: Large ribosomal subunit protein uL18 (122 aa).

The segment covering 1–19 (MTKLSRKLQTQKRHRRLRR) has biased composition (basic residues). Residues 1 to 21 (MTKLSRKLQTQKRHRRLRRSV) are disordered.

It belongs to the universal ribosomal protein uL18 family. As to quaternary structure, part of the 50S ribosomal subunit; part of the 5S rRNA/L5/L18/L25 subcomplex. Contacts the 5S and 23S rRNAs.

Functionally, this is one of the proteins that bind and probably mediate the attachment of the 5S RNA into the large ribosomal subunit, where it forms part of the central protuberance. The protein is Large ribosomal subunit protein uL18 of Prochlorococcus marinus (strain MIT 9312).